A 315-amino-acid chain; its full sequence is Ribosomal RNA small subunit methyltransferase H (315 aa).

S-adenosyl-L-methionine contacts are provided by residues 35–37 (GGH), Asp55, Phe79, Asp101, and Gln108.

It belongs to the methyltransferase superfamily. RsmH family.

The protein localises to the cytoplasm. The enzyme catalyses cytidine(1402) in 16S rRNA + S-adenosyl-L-methionine = N(4)-methylcytidine(1402) in 16S rRNA + S-adenosyl-L-homocysteine + H(+). Specifically methylates the N4 position of cytidine in position 1402 (C1402) of 16S rRNA. The sequence is that of Ribosomal RNA small subunit methyltransferase H from Sodalis glossinidius (strain morsitans).